The following is a 159-amino-acid chain: MPELKIKTEKVEKQLTKEPLVLKTPKEKIDNLGKFYATGKRKNAIARVWLKVGKGKIVVNKKTIAQYFPSETYVKTILQPFVLTKTIDQYDIICTVRGGGISGQKGAILHGISKALDKSAPDFHAILRKGGLLTRDSRVVERKKYGQRKARKKTQFSKR.

This sequence belongs to the universal ribosomal protein uS9 family.

The chain is Small ribosomal subunit protein uS9 from Rickettsia peacockii (strain Rustic).